We begin with the raw amino-acid sequence, 308 residues long: Leucine-rich repeat-containing protein 59 (308 aa).

The Cytoplasmic segment spans residues 1 to 248; sequence MARANGRSQN…LARRQSRLRK (248 aa). 5 LRR repeats span residues 10–31, 40–61, 63–84, 86–107, and 109–128; these read NLRDKLDGNELDLSLSDLSEVP, KATALDLSCNKLTSLPDDFCNL, YIVRLDLSKNQIAQLPSEFGRL, NLQHLDLLQNRIVALPVSFAQL, and SLKWLDLKDNPLKPALAKVA. Residues 154-223 adopt a coiled-coil conformation; it reads DHERELQRKL…NNNKKKAEEE (70 aa). Composition is skewed to basic and acidic residues over residues 170 to 187, 194 to 203, and 218 to 237; these read KQRLEAQQRVKEEQDREL, QQKERKRRDY, and KKAEEEPSENHKPVPTPKEK. The tract at residues 170–240 is disordered; the sequence is KQRLEAQQRV…VPTPKEKKLA (71 aa). The helical transmembrane segment at 249–269 threads the bilayer; sequence IACILLFGLMVALLGVVACRF. At 270 to 308 the chain is on the lumenal side; that stretch reads TDLKTFEVCRSVNAVYKETLSALHSNPVLERFLQDPSSQ.

In terms of assembly, interacts with SGO1.

It is found in the microsome membrane. Its subcellular location is the endoplasmic reticulum membrane. The protein localises to the nucleus envelope. Functionally, required for nuclear import of FGF1. This chain is Leucine-rich repeat-containing protein 59 (lrrc59), found in Xenopus tropicalis (Western clawed frog).